The following is a 335-amino-acid chain: Glyceraldehyde-3-phosphate dehydrogenase (335 aa).

Residues 13-14 (TI) and glycine 111 each bind NAD(+). Residue 140-142 (SCN) participates in D-glyceraldehyde 3-phosphate binding. The active-site Nucleophile is the cysteine 141. Position 169 (arginine 169) interacts with NAD(+). D-glyceraldehyde 3-phosphate-binding positions include threonine 171 and 195-196 (HG). Residue glutamine 300 participates in NAD(+) binding.

The protein belongs to the glyceraldehyde-3-phosphate dehydrogenase family. As to quaternary structure, homotetramer.

Its subcellular location is the cytoplasm. The enzyme catalyses D-glyceraldehyde 3-phosphate + phosphate + NADP(+) = (2R)-3-phospho-glyceroyl phosphate + NADPH + H(+). The catalysed reaction is D-glyceraldehyde 3-phosphate + phosphate + NAD(+) = (2R)-3-phospho-glyceroyl phosphate + NADH + H(+). It participates in carbohydrate degradation; glycolysis; pyruvate from D-glyceraldehyde 3-phosphate: step 1/5. In Methanosarcina mazei (strain ATCC BAA-159 / DSM 3647 / Goe1 / Go1 / JCM 11833 / OCM 88) (Methanosarcina frisia), this protein is Glyceraldehyde-3-phosphate dehydrogenase.